The primary structure comprises 1390 residues: Nuclear pore complex protein Nup155 (1390 aa).

Residue Ser525 is glycosylated (O-linked (GlcNAc) serine). The segment at 598 to 632 (GSPMYSSSPVPTGSPYPNPSSLGTPSHGAQPPTMS) is disordered. A Glycyl lysine isopeptide (Lys-Gly) (interchain with G-Cter in SUMO2) cross-link involves residue Lys739. A disordered region spans residues 984-1011 (QSKAAPQSPSVPKKPGPPVLSSDPNMLS). Phosphoserine is present on Ser1056.

This sequence belongs to the non-repetitive/WGA-negative nucleoporin family. Interacts with GLE1. Able to form a heterotrimer with GLE1 and NUP42 in vitro. Forms a complex with NUP35, NUP93, NUP205 and lamin B. In terms of processing, phosphorylated. Phosphorylation and dephosphorylation may be important for the function of NUP155 and may play a role in the reversible disassembly of the nuclear pore complex during mitosis. Post-translationally, disulfide-linked to NUP62. The inner channel of the NPC has a different redox environment from the cytoplasm and allows the formation of interchain disulfide bonds between some nucleoporins, the significant increase of these linkages upon oxidative stress reduces the permeability of the NPC.

It localises to the nucleus. The protein localises to the nuclear pore complex. Its subcellular location is the nucleus membrane. Its function is as follows. Essential component of nuclear pore complex. Could be essessential for embryogenesis. Nucleoporins may be involved both in binding and translocating proteins during nucleocytoplasmic transport. In Rattus norvegicus (Rat), this protein is Nuclear pore complex protein Nup155 (Nup155).